Consider the following 281-residue polypeptide: Large ribosomal subunit protein uL2 (281 aa).

Residues 224 to 281 form a disordered region; that stretch reads RGSAMNPNDHPHGGGEGHQPIGRKSPMTPWGKKALGVKTRKTKKASNQFIIRRRKESK.

Belongs to the universal ribosomal protein uL2 family. As to quaternary structure, part of the 50S ribosomal subunit. Forms a bridge to the 30S subunit in the 70S ribosome.

In terms of biological role, one of the primary rRNA binding proteins. Required for association of the 30S and 50S subunits to form the 70S ribosome, for tRNA binding and peptide bond formation. It has been suggested to have peptidyltransferase activity; this is somewhat controversial. Makes several contacts with the 16S rRNA in the 70S ribosome. The chain is Large ribosomal subunit protein uL2 from Metamycoplasma arthritidis (strain 158L3-1) (Mycoplasma arthritidis).